Consider the following 755-residue polypeptide: Exocyst complex component 3 (755 aa).

Residue lysine 38 is modified to N6-acetyllysine.

The protein belongs to the SEC6 family. In terms of assembly, the exocyst complex is composed of EXOC1, EXOC2, EXOC3, EXOC4, EXOC5, EXOC6, EXOC7 and EXOC8. Interacts with EXOC3L1. Interacts with BIRC6/bruce. Interacts with MYRIP. Interacts with SLC6A9.

It localises to the cytoplasm. The protein localises to the perinuclear region. Its subcellular location is the cell projection. The protein resides in the growth cone. It is found in the midbody. It localises to the golgi apparatus. The protein localises to the neuron projection. Component of the exocyst complex involved in the docking of exocytic vesicles with fusion sites on the plasma membrane. The sequence is that of Exocyst complex component 3 (Exoc3) from Mus musculus (Mouse).